A 708-amino-acid chain; its full sequence is Protein psiF (708 aa).

Positions 1–19 (MKYLFIAIILILYCSFTKA) are cleaved as a signal peptide. Topologically, residues 20-643 (DQKKFLVNMY…QSTAVKVGVG (624 aa)) are extracellular. N-linked (GlcNAc...) asparagine glycans are attached at residues asparagine 78, asparagine 116, asparagine 222, asparagine 317, asparagine 318, asparagine 371, asparagine 498, and asparagine 600. The PA14 domain occupies 103–263 (TQTAGSQNYY…YDYCGICNGK (161 aa)). Residues 644 to 664 (IGAAAAAGIAIGGAVAAGLAI) form a helical membrane-spanning segment. At 665–708 (FGGKKAYDTWKTSRGNVMTGSQSNPLYTQNQNNGNNPLYSAPAE) the chain is on the cytoplasmic side. A compositionally biased stretch (polar residues) spans 682–702 (MTGSQSNPLYTQNQNNGNNPL). The tract at residues 682 to 708 (MTGSQSNPLYTQNQNNGNNPLYSAPAE) is disordered.

Belongs to the prespore-cell-inducing factor family. As to quaternary structure, forms a complex with dicB.

The protein resides in the membrane. The protein localises to the secreted. Its function is as follows. Acts as a quorum sensing protein regulating discoidin gene expression during growth and development. D.discoideum is a single-celled amoebae and switches to multicellular development when food becomes limited. As the growing cells reach a high density, they begin expressing discoidin genes. The ability of psiF/dicA to induce discoidin gene expression when present in conditioned medium, suggests that it allows cells to sense their local density. This is Protein psiF (psiF) from Dictyostelium discoideum (Social amoeba).